Consider the following 150-residue polypeptide: Putative pre-16S rRNA nuclease (150 aa).

The protein belongs to the YqgF nuclease family.

It localises to the cytoplasm. Its function is as follows. Could be a nuclease involved in processing of the 5'-end of pre-16S rRNA. This Chlamydia felis (strain Fe/C-56) (Chlamydophila felis) protein is Putative pre-16S rRNA nuclease.